The sequence spans 219 residues: MPIGVPKVPFRLPGEEDAVWVDIYNRLYRERLLFLGQRVDDEIANQLIGIMMYLNGEDDSKEMFMYINSPGGSVVAGIAVFDAMQYVGPDVTTICMGMAASMGSFILMGGEMTKRIALPHARVMIHQPASSYYDGQAGECLMEAEEVLKLRDCIAKVYMNRTGQPGWVIYRDMDRDIFMSALEAKSYGIVDLVGEDPTATPSVWFRWPSLLDSKDSNEK.

Ser-101 functions as the Nucleophile in the catalytic mechanism. His-126 is an active-site residue.

This sequence belongs to the peptidase S14 family. In terms of assembly, component of the chloroplastic Clp protease core complex.

It is found in the plastid. Its subcellular location is the chloroplast stroma. It carries out the reaction Hydrolysis of proteins to small peptides in the presence of ATP and magnesium. alpha-casein is the usual test substrate. In the absence of ATP, only oligopeptides shorter than five residues are hydrolyzed (such as succinyl-Leu-Tyr-|-NHMec, and Leu-Tyr-Leu-|-Tyr-Trp, in which cleavage of the -Tyr-|-Leu- and -Tyr-|-Trp bonds also occurs).. Functionally, cleaves peptides in various proteins in a process that requires ATP hydrolysis. Has a chymotrypsin-like activity. Plays a major role in the degradation of misfolded proteins. The sequence is that of ATP-dependent Clp protease proteolytic subunit from Chara vulgaris (Common stonewort).